A 509-amino-acid polypeptide reads, in one-letter code: Probable cation transporter HKT2;3 (509 aa).

At 1–32 (MPIRLHIFVNSARHAINSSAFICRFIAYHLSP) the chain is on the cytoplasmic side. The next 2 membrane-spanning stretches (helical) occupy residues 33-53 (LLIH…SLVV) and 96-116 (ILTL…GLVL). At 117 to 164 (ESSKQNKHDPENRRVSSVTVCKQSQLEEATPQTPSMNSIDIKKRCLKY) the chain is on the cytoplasmic side. A run of 2 helical transmembrane segments spans residues 165 to 185 (LVFV…LLVF) and 237 to 257 (GLLL…PVFL). Topologically, residues 258–296 (RLVIWALRGLRLAKAEEPDFMMNNSSAVGFSHLLPNLQT) are cytoplasmic. Transmembrane regions (helical) follow at residues 297–317 (IFLA…FCCL) and 353–373 (CSLV…TPSL). Residues 374–400 (TKLFSACQDHKRIGPESDDRTSKGKPF) lie on the Cytoplasmic side of the membrane. Transmembrane regions (helical) follow at residues 401–421 (LKMM…LVCI) and 474–494 (AYNF…LAML). Residues 495–509 (CGRLNSKDSTSARTR) are Cytoplasmic-facing.

The protein belongs to the TrkH potassium transport family. HKT (TC 2.A.38.3) subfamily.

It is found in the membrane. Functionally, probable cation transporter. May be involved in regulation of potassium-sodium homeostasis. In Oryza sativa subsp. japonica (Rice), this protein is Probable cation transporter HKT2;3.